Here is a 528-residue protein sequence, read N- to C-terminus: Putative B3 domain-containing protein REM15 (528 aa).

DNA-binding regions (TF-B3) lie at residues 3–95 and 135–231; these read HQHF…LGPS and CFVA…LPNE. Positions 234–253 are disordered; it reads EEANEVSLPEEPESDAERNL. DNA-binding regions (TF-B3) lie at residues 279–376 and 425–522; these read CFVA…IPNE and QSSL…FCSK.

Its subcellular location is the nucleus. This is Putative B3 domain-containing protein REM15 (REM15.15) from Arabidopsis thaliana (Mouse-ear cress).